Consider the following 262-residue polypeptide: (5R,7aS)-5-hydroxy-7a-methyl-1-oxo-2,3,5,6,7,7a-hexahydro-1H-indene-carboxyl-CoA reductase (262 aa).

NAD(+) contacts are provided by Asp50, Asp77, Val78, Asn104, Tyr170, Lys174, and Ala203. Tyr170 acts as the Proton acceptor in catalysis.

Belongs to the short-chain dehydrogenases/reductases (SDR) family.

It catalyses the reaction (5R,7aS)-5-hydroxy-7a-methyl-1-oxo-2,3,5,6,7,7a-hexahydro-1H-indene-carboxyl-CoA + NAD(+) = (7aS)-7a-methyl-1,5-dioxo-2,3,5,6,7,7a-hexahydro-1H-indene-carboxyl-CoA + NADH + H(+). It functions in the pathway steroid metabolism; cholesterol degradation. Requires the presence of IpdC. In terms of biological role, involved in the final steps of cholesterol and steroid degradation. Probably catalyzes the oxidation of the 5-OH group of (5R,7aS)-5-hydroxy-7a-methyl-1-oxo-2,3,5,6,7,7a-hexahydro-1H-indene-carboxyl-CoA, leading to the formation of HIEC-CoA. This chain is (5R,7aS)-5-hydroxy-7a-methyl-1-oxo-2,3,5,6,7,7a-hexahydro-1H-indene-carboxyl-CoA reductase, found in Mycobacterium tuberculosis (strain ATCC 25618 / H37Rv).